We begin with the raw amino-acid sequence, 364 residues long: Acidic fibroblast growth factor intracellular-binding protein (364 aa).

T2 bears the N-acetylthreonine mark.

Binds to internalized FGF1; this interaction is increased in the presence of CSNKB, suggesting a possible cooperative interaction between CSNKB and FIBP in binding to FGF1. Highly expressed in heart, skeletal muscle and pancreas. Expressed at lower levels in brain. Also found in placenta, liver and kidney.

Its subcellular location is the nucleus. The protein localises to the endomembrane system. May be involved in mitogenic function of FGF1. May mediate with IER2 FGF-signaling in the establishment of laterality in the embryo. The polypeptide is Acidic fibroblast growth factor intracellular-binding protein (FIBP) (Homo sapiens (Human)).